A 382-amino-acid polypeptide reads, in one-letter code: Heme A synthase (382 aa).

Transmembrane regions (helical) follow at residues 25–45 (GAVRAWLYLLAVLVVAMVAVG), 112–132 (LLGRIVGLVFFLPFAWFWARG), 138–158 (LLLGLLGLGLLGGLQGAIGWI), 176–196 (LALHLTTASLILAGLVWLAAG), 211–231 (VVAGLLPALVLVQIWLGGLVA), 270–290 (LALVQFNHRLFAYLVVVVAIA), 303–323 (AAAGRAMGLAALATAQMGLGI), and 327–347 (LLHVPLWAGLAHQVFAMAVLI). His-277 contacts heme. His-338 contacts heme.

It belongs to the COX15/CtaA family. Type 2 subfamily. In terms of assembly, interacts with CtaB. Requires heme b as cofactor.

It localises to the cell membrane. The catalysed reaction is Fe(II)-heme o + 2 A + H2O = Fe(II)-heme a + 2 AH2. Its pathway is porphyrin-containing compound metabolism; heme A biosynthesis; heme A from heme O: step 1/1. In terms of biological role, catalyzes the conversion of heme O to heme A by two successive hydroxylations of the methyl group at C8. The first hydroxylation forms heme I, the second hydroxylation results in an unstable dihydroxymethyl group, which spontaneously dehydrates, resulting in the formyl group of heme A. The chain is Heme A synthase from Methylorubrum extorquens (strain PA1) (Methylobacterium extorquens).